A 155-amino-acid polypeptide reads, in one-letter code: Xanthine-guanine phosphoribosyltransferase 2 (155 aa).

5-phospho-alpha-D-ribose 1-diphosphate-binding positions include 37-38 and 91-99; these read RG and DDLVDTGNT. Asp-92 contacts Mg(2+). Guanine contacts are provided by Asp-95 and Ile-138. 2 residues coordinate xanthine: Asp-95 and Ile-138. GMP contacts are provided by residues 95-99 and 137-138; these read DTGNT and WI.

Belongs to the purine/pyrimidine phosphoribosyltransferase family. XGPT subfamily. Homotetramer. The cofactor is Mg(2+).

It is found in the cell inner membrane. The catalysed reaction is GMP + diphosphate = guanine + 5-phospho-alpha-D-ribose 1-diphosphate. It catalyses the reaction XMP + diphosphate = xanthine + 5-phospho-alpha-D-ribose 1-diphosphate. It carries out the reaction IMP + diphosphate = hypoxanthine + 5-phospho-alpha-D-ribose 1-diphosphate. The protein operates within purine metabolism; GMP biosynthesis via salvage pathway; GMP from guanine: step 1/1. It functions in the pathway purine metabolism; XMP biosynthesis via salvage pathway; XMP from xanthine: step 1/1. Its function is as follows. Purine salvage pathway enzyme that catalyzes the transfer of the ribosyl-5-phosphate group from 5-phospho-alpha-D-ribose 1-diphosphate (PRPP) to the N9 position of the 6-oxopurines guanine and xanthine to form the corresponding ribonucleotides GMP (guanosine 5'-monophosphate) and XMP (xanthosine 5'-monophosphate), with the release of PPi. To a lesser extent, also acts on hypoxanthine. The sequence is that of Xanthine-guanine phosphoribosyltransferase 2 from Haemophilus influenzae (strain 86-028NP).